We begin with the raw amino-acid sequence, 208 residues long: Guanylate kinase (208 aa).

A Guanylate kinase-like domain is found at 8 to 187 (GVCLVISAPS…AISQARSVLT (180 aa)). Residue 15–22 (APSGAGKS) participates in ATP binding.

It belongs to the guanylate kinase family.

The protein resides in the cytoplasm. It carries out the reaction GMP + ATP = GDP + ADP. Functionally, essential for recycling GMP and indirectly, cGMP. This is Guanylate kinase from Gluconobacter oxydans (strain 621H) (Gluconobacter suboxydans).